Consider the following 947-residue polypeptide: Bromodomain testis-specific protein (947 aa).

In terms of domain architecture, Bromo 1 spans 27-133 (RLTNQLQYLQ…KLFMQKLSQM (107 aa)). Asn-109 provides a ligand contact to JQ1. Residue Ser-187 is modified to Phosphoserine. Residues 202-228 (QTAAQVTKGVKRKADTTTPATSAVKAS) are disordered. A Nuclear localization signal motif is present at residues 209 to 220 (KGVKRKADTTTP). The span at 217–228 (TTTPATSAVKAS) shows a compositional bias: polar residues. A Bromo 2 domain is found at 267–376 (VKVTEQLRHC…DVFETHFSKI (110 aa)). Disordered regions lie at residues 395-420 (ETTGRENTNEASSEGNSSDDSEDERV), 444-511 (PFRK…KPMN), 610-698 (NNQL…IPPE), and 882-924 (NKCS…RRRE). Residues 417–470 (DERVKRLAKLQEQLKAVHQQLQVLSQVPFRKLNKKKEKSKKEKKKEKVNNSNEN) adopt a coiled-coil conformation. Residues 447–462 (KLNKKKEKSKKEKKKE) are compositionally biased toward basic residues. Over residues 470–481 (NPRKMCEQMRLK) the composition is skewed to basic and acidic residues. A compositionally biased stretch (basic residues) spans 482–494 (EKSKRNQPKKRKQ). In terms of domain architecture, NET spans 500-582 (KSEDEDNAKP…ACLRKRPLKP (83 aa)). Positions 591 to 621 (KEELHSQKKQELEKRLLDVNNQLNSRKRQTK) form a coiled coil. Over residues 637–662 (LSESSSSSSSSSESESSSSDLSSSDS) the composition is skewed to low complexity. Basic and acidic residues-rich tracts occupy residues 674–692 (TEVKPNDSPSKENVKKMKN) and 885–924 (SGEEQKEHQQSSEAQDKSKLWLLKDRDLARQKEQERRRRE).

This sequence belongs to the BET family. As to quaternary structure, interacts with mRNA splicing machinery proteins SRSF2, DDX5, HNRNPK and TARDBP. Interacts with the acetylated N-terminus of histone H1, H2, H3 and H4. Interacts with P-TEFb components CDK9 and CCNT1/cyclin-T1. Interacts with SMARCE1. Interacts with the acetylated N-terminus of histone H1.4, H2A, H2B, H3 and H4. In terms of processing, ubiquitinated in a SPOP-dependent manner, leading to proteasomal degradation. As to expression, testis-specific. A 3-fold higher expression is seen in adult testis than in embryo testis. Expression seems to be correlated with histone H4 hyperacetylation during the haploid phase of spermatogenesis (spermiogenesis). No expression, or very low expression is seen in patients' testes with abnormal spermatogenesis. Expressed in cancers such as non-small cell lung cancer and squamous cell carcinomas of the head and neck as well as of esophagus, but not in melanoma or in cancers of the colon, breast, kidney and bladder.

It localises to the nucleus. In terms of biological role, testis-specific chromatin protein that specifically binds histone H4 acetylated at 'Lys-5' and 'Lys-8' (H4K5ac and H4K8ac, respectively) and plays a key role in spermatogenesis. Required in late pachytene spermatocytes: plays a role in meiotic and post-meiotic cells by binding to acetylated histones at the promoter of specific meiotic and post-meiotic genes, facilitating their activation at the appropriate time. In the post-meiotic phase of spermatogenesis, binds to hyperacetylated histones and participates in their general removal from DNA. Also recognizes and binds a subset of butyrylated histones: able to bind histone H4 butyrylated at 'Lys-8' (H4K8ac), while it is not able to bind H4 butyrylated at 'Lys-5' (H4K5ac). Also acts as a component of the splicing machinery in pachytene spermatocytes and round spermatids and participates in 3'-UTR truncation of specific mRNAs in post-meiotic spermatids. Required for chromocenter organization, a structure comprised of peri-centromeric heterochromatin. The chain is Bromodomain testis-specific protein (BRDT) from Homo sapiens (Human).